Reading from the N-terminus, the 881-residue chain is Heat shock protein 70 homolog LHS1 (881 aa).

The signal sequence occupies residues 1 to 20 (MRNVLRLLFLTAFVAIGSLA). 7 N-linked (GlcNAc...) asparagine glycosylation sites follow: Asn128, Asn458, Asn474, Asn481, Asn489, Asn527, and Asn844. Over residues 833 to 844 (RKLEQEKSRNNN) the composition is skewed to basic and acidic residues. The tract at residues 833–881 (RKLEQEKSRNNNETESTVINSADDKTTIVNDKTTESNPSSEEDILHDEL) is disordered. Residues 859–871 (TIVNDKTTESNPS) show a composition bias toward polar residues. Residues 872 to 881 (SEEDILHDEL) are compositionally biased toward acidic residues. A Prevents secretion from ER motif is present at residues 878–881 (HDEL).

It belongs to the heat shock protein 70 family. In terms of assembly, interacts with the heat shock protein 70 (HSP70) KAR2, and this stimulates nucleotide exchange on KAR2. KAR2 in turn acts to stimulate the ATPase activity of LHS1. Post-translationally, N-glycosylated.

The protein localises to the endoplasmic reticulum lumen. The catalysed reaction is ATP + H2O = ADP + phosphate + H(+). Its function is as follows. Chaperone required for protein translocation and folding in the endoplasmic reticulum. In Saccharomyces cerevisiae (strain ATCC 204508 / S288c) (Baker's yeast), this protein is Heat shock protein 70 homolog LHS1 (LHS1).